Here is a 137-residue protein sequence, read N- to C-terminus: Oleosin Ara h 11.0102 (137 aa).

Ala-2 is subject to N-acetylalanine; alternate. 2 helical membrane-spanning segments follow: residues 27-47 (AVVAGGSLLILAGLVLAATVI) and 55-75 (LFVIFSPVLVPAVITVALLGL).

Belongs to the oleosin family. In terms of tissue distribution, expressed in seeds (at protein level).

It is found in the lipid droplet. It localises to the membrane. Functionally, may have a structural role to stabilize the lipid body during desiccation of the seed by preventing coalescence of the oil. Probably interacts with both lipid and phospholipid moieties of lipid bodies. May also provide recognition signals for specific lipase anchorage in lipolysis during seedling growth. The protein is Oleosin Ara h 11.0102 of Arachis hypogaea (Peanut).